A 94-amino-acid chain; its full sequence is DNA-directed RNA polymerase subunit omega (94 aa).

The protein belongs to the RNA polymerase subunit omega family. As to quaternary structure, the RNAP catalytic core consists of 2 alpha, 1 beta, 1 beta' and 1 omega subunit. When a sigma factor is associated with the core the holoenzyme is formed, which can initiate transcription.

It catalyses the reaction RNA(n) + a ribonucleoside 5'-triphosphate = RNA(n+1) + diphosphate. Its function is as follows. Promotes RNA polymerase assembly. Latches the N- and C-terminal regions of the beta' subunit thereby facilitating its interaction with the beta and alpha subunits. The polypeptide is DNA-directed RNA polymerase subunit omega (Photobacterium profundum (strain SS9)).